The following is a 355-amino-acid chain: RNA 3'-terminal phosphate cyclase (355 aa).

ATP is bound by residues Gln109 and His291 to Gln295. His316 functions as the Tele-AMP-histidine intermediate in the catalytic mechanism.

This sequence belongs to the RNA 3'-terminal cyclase family. Type 1 subfamily.

It is found in the cytoplasm. It carries out the reaction a 3'-end 3'-phospho-ribonucleotide-RNA + ATP = a 3'-end 2',3'-cyclophospho-ribonucleotide-RNA + AMP + diphosphate. Functionally, catalyzes the conversion of 3'-phosphate to a 2',3'-cyclic phosphodiester at the end of RNA. The mechanism of action of the enzyme occurs in 3 steps: (A) adenylation of the enzyme by ATP; (B) transfer of adenylate to an RNA-N3'P to produce RNA-N3'PP5'A; (C) and attack of the adjacent 2'-hydroxyl on the 3'-phosphorus in the diester linkage to produce the cyclic end product. The biological role of this enzyme is unknown but it is likely to function in some aspects of cellular RNA processing. The protein is RNA 3'-terminal phosphate cyclase of Koribacter versatilis (strain Ellin345).